The primary structure comprises 66 residues: Large ribosomal subunit protein bL33c (66 aa).

Belongs to the bacterial ribosomal protein bL33 family.

It localises to the plastid. The protein localises to the chloroplast. In Liriodendron tulipifera (Tuliptree), this protein is Large ribosomal subunit protein bL33c.